The primary structure comprises 114 residues: Progonadoliberin-2 (114 aa).

The signal sequence occupies residues 1–25 (MASSMLGFLLLLLLLMAAHPGPSEA). The tract at residues 22 to 80 (PSEAQHWSHGWYPGGKRASNSPQDPQSALRPPAPSAAQTAHSFRSAALASPEDSVPWEG) is disordered. The residue at position 35 (Gly-35) is a Glycine amide.

Belongs to the GnRH family. As to expression, midbrain.

Its subcellular location is the secreted. Functionally, stimulates the secretion of gonadotropins; it stimulates the secretion of both luteinizing and follicle-stimulating hormones. In Tupaia belangeri (Common tree shrew), this protein is Progonadoliberin-2 (GNRH2).